A 343-amino-acid chain; its full sequence is MKIKALSKLKPEEGIWMNEVDKPEMGHNDLLIRIKKTAICGTDVHIYNWDEWSQKTIPVPMVVGHEYVGEVVGIGQEVRGFTIGDRVSGEGHITCGHCRNCRGGRTHLCRNTTGVGVNRDGAFAEFLVIPAFNAFKIPAGISDDLASIFDPFGNAVHTALSFDLVGEDVLITGAGPIGIMAAAVAKHVGARHVVITDVNEYRLDLARKMGVTRAVNVANEKLEDVMSELGMTEGFDVGLEMSGVPSAFNGMLASMNHGGKVALLGIPPSDMAVDWTQVIFKGLVIKGIYGREMFETWYKMASLIQSGLDLTPIITHHYKIDDFQKGFDMMRSGMSGKVILDWE.

A Zn(2+)-binding site is contributed by cysteine 40. Active-site charge relay system residues include threonine 42 and histidine 45. Histidine 65, glutamate 66, cysteine 95, cysteine 98, cysteine 101, and cysteine 109 together coordinate Zn(2+). Residues isoleucine 177, aspartate 197, arginine 202, 264-266 (LGI), and 288-289 (IY) contribute to the NAD(+) site.

This sequence belongs to the zinc-containing alcohol dehydrogenase family. In terms of assembly, homotetramer. It depends on Zn(2+) as a cofactor.

It is found in the cytoplasm. The catalysed reaction is L-threonine + NAD(+) = (2S)-2-amino-3-oxobutanoate + NADH + H(+). It participates in amino-acid degradation; L-threonine degradation via oxydo-reductase pathway; glycine from L-threonine: step 1/2. Functionally, catalyzes the NAD(+)-dependent oxidation of L-threonine to 2-amino-3-ketobutyrate. In Photobacterium profundum (strain SS9), this protein is L-threonine 3-dehydrogenase.